Here is a 327-residue protein sequence, read N- to C-terminus: Glycerol-3-phosphate dehydrogenase [NAD(P)+] (327 aa).

NADPH contacts are provided by Phe-14, Arg-35, and Lys-108. Positions 108 and 136 each coordinate sn-glycerol 3-phosphate. NADPH is bound at residue Ala-140. The sn-glycerol 3-phosphate site is built by Lys-191, Asp-244, Ser-254, Arg-255, and Asn-256. The active-site Proton acceptor is the Lys-191. Residue Arg-255 participates in NADPH binding. Leu-275 and Glu-277 together coordinate NADPH.

This sequence belongs to the NAD-dependent glycerol-3-phosphate dehydrogenase family.

Its subcellular location is the cytoplasm. The enzyme catalyses sn-glycerol 3-phosphate + NAD(+) = dihydroxyacetone phosphate + NADH + H(+). It catalyses the reaction sn-glycerol 3-phosphate + NADP(+) = dihydroxyacetone phosphate + NADPH + H(+). It functions in the pathway membrane lipid metabolism; glycerophospholipid metabolism. Functionally, catalyzes the reduction of the glycolytic intermediate dihydroxyacetone phosphate (DHAP) to sn-glycerol 3-phosphate (G3P), the key precursor for phospholipid synthesis. The polypeptide is Glycerol-3-phosphate dehydrogenase [NAD(P)+] (Agrobacterium fabrum (strain C58 / ATCC 33970) (Agrobacterium tumefaciens (strain C58))).